Here is a 410-residue protein sequence, read N- to C-terminus: Multifunctional CCA protein (410 aa).

ATP is bound by residues Gly-8 and Arg-11. CTP contacts are provided by Gly-8 and Arg-11. Positions 21 and 23 each coordinate Mg(2+). The ATP site is built by Arg-91, Arg-137, and Arg-140. Residues Arg-91, Arg-137, and Arg-140 each coordinate CTP. An HD domain is found at 228 to 329 (TGVHVLSVLQ…LELLQSFDVY (102 aa)).

This sequence belongs to the tRNA nucleotidyltransferase/poly(A) polymerase family. Bacterial CCA-adding enzyme type 1 subfamily. In terms of assembly, monomer. Can also form homodimers and oligomers. Requires Mg(2+) as cofactor. The cofactor is Ni(2+).

It catalyses the reaction a tRNA precursor + 2 CTP + ATP = a tRNA with a 3' CCA end + 3 diphosphate. The catalysed reaction is a tRNA with a 3' CCA end + 2 CTP + ATP = a tRNA with a 3' CCACCA end + 3 diphosphate. Functionally, catalyzes the addition and repair of the essential 3'-terminal CCA sequence in tRNAs without using a nucleic acid template. Adds these three nucleotides in the order of C, C, and A to the tRNA nucleotide-73, using CTP and ATP as substrates and producing inorganic pyrophosphate. tRNA 3'-terminal CCA addition is required both for tRNA processing and repair. Also involved in tRNA surveillance by mediating tandem CCA addition to generate a CCACCA at the 3' terminus of unstable tRNAs. While stable tRNAs receive only 3'-terminal CCA, unstable tRNAs are marked with CCACCA and rapidly degraded. The protein is Multifunctional CCA protein of Pseudomonas paraeruginosa (strain DSM 24068 / PA7) (Pseudomonas aeruginosa (strain PA7)).